Consider the following 636-residue polypeptide: uncharacterized protein (636 aa).

The zn(2)-C6 fungal-type DNA-binding region spans 10-36 (CLACRRKKVKCNRQYPCTRCLKYGEAC). Over residues 556–580 (NSQSTSEFVSPISDTENGSSSQQVS) the composition is skewed to polar residues. The interval 556–581 (NSQSTSEFVSPISDTENGSSSQQVSE) is disordered.

It localises to the cytoplasm. It is found in the nucleus. This is an uncharacterized protein from Schizosaccharomyces pombe (strain 972 / ATCC 24843) (Fission yeast).